Here is a 429-residue protein sequence, read N- to C-terminus: Ribosomal RNA small subunit methyltransferase B (429 aa).

S-adenosyl-L-methionine contacts are provided by residues 254 to 260 (CAAPGGK), aspartate 277, aspartate 303, and aspartate 322. Cysteine 375 serves as the catalytic Nucleophile.

The protein belongs to the class I-like SAM-binding methyltransferase superfamily. RsmB/NOP family.

Its subcellular location is the cytoplasm. It carries out the reaction cytidine(967) in 16S rRNA + S-adenosyl-L-methionine = 5-methylcytidine(967) in 16S rRNA + S-adenosyl-L-homocysteine + H(+). In terms of biological role, specifically methylates the cytosine at position 967 (m5C967) of 16S rRNA. The sequence is that of Ribosomal RNA small subunit methyltransferase B from Salmonella arizonae (strain ATCC BAA-731 / CDC346-86 / RSK2980).